The primary structure comprises 165 residues: Growth arrest and DNA damage-inducible protein GADD45 alpha (165 aa).

A Phosphothreonine modification is found at Thr-2.

This sequence belongs to the GADD45 family. Interacts with AURKA, GADD45GIP1 and PCNA. Interacts with MAPK14.

The protein resides in the nucleus. In terms of biological role, might affect PCNA interaction with some CDK (cell division protein kinase) complexes; stimulates DNA excision repair in vitro and inhibits entry of cells into S phase. In T-cells, functions as a regulator of p38 MAPKs by inhibiting p88 phosphorylation and activity. The polypeptide is Growth arrest and DNA damage-inducible protein GADD45 alpha (Gadd45a) (Mus musculus (Mouse)).